The following is a 1128-amino-acid chain: Mastermind-like protein 2 (1128 aa).

Disordered stretches follow at residues M1–L22 and Q81–R167. The span at G12–L22 shows a compositional bias: gly residues. Positions P113–A122 are enriched in low complexity. S177 carries the post-translational modification Phosphoserine. Disordered regions lie at residues F343–Q509, S521–P649, Q677–N714, Q758–T794, and G1039–D1073. Polar residues-rich tracts occupy residues L347 to R357 and G374 to P387. Positions S395–A426 are enriched in low complexity. A compositionally biased stretch (polar residues) spans Q431–R446. Low complexity-rich tracts occupy residues H453–P473 and P484–S497. A compositionally biased stretch (polar residues) spans N566–P584. Positions T590–P649 are enriched in low complexity. 3 stretches are compositionally biased toward polar residues: residues Q677–G695, N778–T794, and G1039–P1052.

It belongs to the mastermind family. In terms of assembly, interacts through its N-terminal region with the ankyrin repeat region of the Notch proteins NOTCH1, NOTCH2, NOTCH3 and NOTCH4. Forms a DNA-binding complex with Notch proteins and RBPSUH/RBP-J kappa.

The protein localises to the nucleus speckle. In terms of biological role, acts as a transcriptional coactivator for NOTCH proteins. Has been shown to amplify NOTCH-induced transcription of HES1. Potentiates activation by NOTCH3 and NOTCH4 more efficiently than MAML1 or MAML3. This chain is Mastermind-like protein 2 (MAML2), found in Bos taurus (Bovine).